A 170-amino-acid chain; its full sequence is MVGACMTIRPLVRYPDRRLAIPARPVTAFDDELRELAADLLDTMRAAPGIGITAPHIGVPLRVVVLELDAKDGARTYVNPEITWASPEMIMHREGSVSMPGVNDEVQRHARVRISYWDLDGTMQTEDSEALRAVCHQHEIDQLDGMFWIQRLSRLKRERLVKKFEKMSRG.

The active site involves glutamate 139.

This sequence belongs to the polypeptide deformylase family.

In Bradyrhizobium diazoefficiens (strain JCM 10833 / BCRC 13528 / IAM 13628 / NBRC 14792 / USDA 110), this protein is Peptide deformylase-like.